Reading from the N-terminus, the 32-residue chain is Secreted protein F2 (32 aa).

It is found in the secreted. The protein is Secreted protein F2 of Globisporangium hypogynum (Pythium hypogynum).